The primary structure comprises 353 residues: Paraneoplastic antigen Ma1 homolog (353 aa).

The protein belongs to the PNMA family.

It localises to the nucleus. The protein resides in the nucleolus. In Bos taurus (Bovine), this protein is Paraneoplastic antigen Ma1 homolog (PNMA1).